The primary structure comprises 205 residues: MTDEQTPAEDVAFEADDASQEIEALKLEVAALKDQALRYAAEAENTKRRAERESNDARAYAIQKFARDLLGAADNLSRATAMSPRDSQDPAVTNYIIGVEMTEKELQGAFERNGLKKIDPAKGEKFDPHLHQAVMEQPSTEVAAGGVLQVLQAGYELMGRLVRPAMVAVAAKGSTGPGAPAEPAAAPNPYASNGADTGGSFDTKA.

A disordered region spans residues 172-205 (KGSTGPGAPAEPAAAPNPYASNGADTGGSFDTKA). The segment covering 177–195 (PGAPAEPAAAPNPYASNGA) has biased composition (low complexity).

This sequence belongs to the GrpE family. In terms of assembly, homodimer.

The protein resides in the cytoplasm. Participates actively in the response to hyperosmotic and heat shock by preventing the aggregation of stress-denatured proteins, in association with DnaK and GrpE. It is the nucleotide exchange factor for DnaK and may function as a thermosensor. Unfolded proteins bind initially to DnaJ; upon interaction with the DnaJ-bound protein, DnaK hydrolyzes its bound ATP, resulting in the formation of a stable complex. GrpE releases ADP from DnaK; ATP binding to DnaK triggers the release of the substrate protein, thus completing the reaction cycle. Several rounds of ATP-dependent interactions between DnaJ, DnaK and GrpE are required for fully efficient folding. The sequence is that of Protein GrpE from Caulobacter sp. (strain K31).